The sequence spans 190 residues: Recombination protein RecR (190 aa).

The C4-type zinc finger occupies 58-73 (CTQCGGLSEDELCYIC). Residues 81–167 (SSLCLVESAR…HFTKIAQGVP (87 aa)) form the Toprim domain.

The protein belongs to the RecR family.

May play a role in DNA repair. It seems to be involved in an RecBC-independent recombinational process of DNA repair. It may act with RecF and RecO. The polypeptide is Recombination protein RecR (Nitratiruptor sp. (strain SB155-2)).